The sequence spans 409 residues: MLDILLFSLYFFFEPVLFFFFMVVFGFVALNNYSWLGCFYFFDSFSFILLIVMSLFILGVVLLSESNFMLLLLSEVLVVVCVFFFVPSNVILMYMYFELSMFPILVMILGYGSQIEKINSSYYLIFYAALCSFPFLFVYFKSFFFISLVYFDFNLSWEMVFVLSLSFMMKFPVYFLHLWLPKAHVEAPTTASMLLAGLLLKLGTAGFLRILGCLSFVHNNVWIVLAFLGMILASFCCMFQSDAKALAAYSSITHMSFVLMALVFIIMSGKTGGVILMLAHGYTSTLMFYLVGEFYHVSGSRMVYYMSSFFGSGMIMALLFAVVFLSNMGTPPSLSFLSEFIVISSSLNMMKFSFWVLFVYFFSAFYYSIYLLTSSVMGKGYVNFSIWNVGFSVPLVFMMYNIFWMSVFF.

13 helical membrane-spanning segments follow: residues 9–29, 44–64, 68–88, 90–110, 125–145, 160–180, 194–214, 221–241, 246–268, 273–295, 305–325, 352–372, and 389–409; these read LYFF…GFVA, SFSF…VLLS, FMLL…FVPS, VILM…MILG, IFYA…SFFF, VFVL…HLWL, LLAG…LGCL, VWIV…MFQS, LAAY…IIMS, GVIL…GEFY, YMSS…VVFL, FSFW…IYLL, and VGFS…SVFF.

It belongs to the complex I subunit 4 family.

The protein localises to the mitochondrion membrane. The catalysed reaction is a ubiquinone + NADH + 5 H(+)(in) = a ubiquinol + NAD(+) + 4 H(+)(out). In terms of biological role, core subunit of the mitochondrial membrane respiratory chain NADH dehydrogenase (Complex I) that is believed to belong to the minimal assembly required for catalysis. Complex I functions in the transfer of electrons from NADH to the respiratory chain. The immediate electron acceptor for the enzyme is believed to be ubiquinone. This is NADH-ubiquinone oxidoreductase chain 4 (ND4) from Ascaris suum (Pig roundworm).